Reading from the N-terminus, the 323-residue chain is Cyclin-H (323 aa).

Residue Ser5 is modified to Phosphoserine; by CDK8. Position 132 is a phosphoserine (Ser132). Positions 295–323 are disordered; that stretch reads KGYEDDDYVSKKPKQEEEEWTDDDLVDSL. A Phosphoserine; by CDK8 modification is found at Ser304. The segment covering 310–323 has biased composition (acidic residues); that stretch reads EEEEWTDDDLVDSL. Thr315 is modified (phosphothreonine). Ser322 is modified (phosphoserine).

Belongs to the cyclin family. Cyclin C subfamily. As to quaternary structure, associates primarily with CDK7 and MAT1 to form the CAK complex. CAK can further associate with the core-TFIIH to form the TFIIH basal transcription factor. In terms of tissue distribution, expressed in both the germinal and somatic cells of the testis.

It is found in the nucleus. Functionally, regulates CDK7, the catalytic subunit of the CDK-activating kinase (CAK) enzymatic complex. CAK activates the cyclin-associated kinases CDK1, CDK2, CDK4 and CDK6 by threonine phosphorylation. CAK complexed to the core-TFIIH basal transcription factor activates RNA polymerase II by serine phosphorylation of the repetitive C-terminal domain (CTD) of its large subunit (POLR2A), allowing its escape from the promoter and elongation of the transcripts. Involved in cell cycle control and in RNA transcription by RNA polymerase II. Its expression and activity are constant throughout the cell cycle. This Mus musculus (Mouse) protein is Cyclin-H (Ccnh).